The sequence spans 707 residues: Polyribonucleotide nucleotidyltransferase (707 aa).

The Mg(2+) site is built by D485 and D491. One can recognise a KH domain in the interval 552–611; that stretch reads PRIYTMKIDPKKIKDVIGKGGATIRTLTEETGTSIDIDDDGTVKIAAIDGNAVKEVMARI. The S1 motif domain occupies 621 to 689; that stretch reads GAVYTGKVTR…RQGRIRLTMK (69 aa).

This sequence belongs to the polyribonucleotide nucleotidyltransferase family. As to quaternary structure, component of the RNA degradosome, which is a multiprotein complex involved in RNA processing and mRNA degradation. The cofactor is Mg(2+).

It is found in the cytoplasm. It carries out the reaction RNA(n+1) + phosphate = RNA(n) + a ribonucleoside 5'-diphosphate. Its function is as follows. Involved in mRNA degradation. Catalyzes the phosphorolysis of single-stranded polyribonucleotides processively in the 3'- to 5'-direction. The polypeptide is Polyribonucleotide nucleotidyltransferase (Actinobacillus succinogenes (strain ATCC 55618 / DSM 22257 / CCUG 43843 / 130Z)).